Here is a 102-residue protein sequence, read N- to C-terminus: Small ribosomal subunit protein uS10 (102 aa).

This sequence belongs to the universal ribosomal protein uS10 family. As to quaternary structure, part of the 30S ribosomal subunit.

Functionally, involved in the binding of tRNA to the ribosomes. The chain is Small ribosomal subunit protein uS10 from Mycoplasma mycoides subsp. mycoides SC (strain CCUG 32753 / NCTC 10114 / PG1).